Reading from the N-terminus, the 447-residue chain is Asparagine--tRNA ligase (447 aa).

This sequence belongs to the class-II aminoacyl-tRNA synthetase family. Homodimer.

It is found in the cytoplasm. The enzyme catalyses tRNA(Asn) + L-asparagine + ATP = L-asparaginyl-tRNA(Asn) + AMP + diphosphate + H(+). This Streptococcus pneumoniae (strain ATCC BAA-255 / R6) protein is Asparagine--tRNA ligase.